Reading from the N-terminus, the 123-residue chain is Small ribosomal subunit protein uS12 (123 aa).

Asp89 bears the 3-methylthioaspartic acid mark.

Belongs to the universal ribosomal protein uS12 family. As to quaternary structure, part of the 30S ribosomal subunit. Contacts proteins S8 and S17. May interact with IF1 in the 30S initiation complex.

Its function is as follows. With S4 and S5 plays an important role in translational accuracy. Interacts with and stabilizes bases of the 16S rRNA that are involved in tRNA selection in the A site and with the mRNA backbone. Located at the interface of the 30S and 50S subunits, it traverses the body of the 30S subunit contacting proteins on the other side and probably holding the rRNA structure together. The combined cluster of proteins S8, S12 and S17 appears to hold together the shoulder and platform of the 30S subunit. The sequence is that of Small ribosomal subunit protein uS12 from Rhodospirillum centenum (strain ATCC 51521 / SW).